Reading from the N-terminus, the 434-residue chain is MSNRKSKNNIHAECLSQVQRILRERFCHHTPHSNLFGVQVQYKHLIELLKRTAIYGESNSLLIVGPRGSGKTTLLNHALKELMQIGDMSENVLQVHLNGLLQTNDKIALKEITRQLNLENVVGDKVFGSFAENLSFLLEALQKGNRTSSCPVIFILDEFDLFAHQKNQTLLYNLFDISQSAQTPIAVIGLTCRLDILELLEKRVKSRFSHRQIHLMNSFDFPQYLKIFKEQLSLPAEFPDKIFAEKWNENAHCLSEDSTVLEVLQKHFNVNKNLQSLHMLLMLALNRVTVTHPFMTSADLMEAQHLCSLDAKASIVHGLSVLEICLIIAMKHLNDIYEEEPFNFQMVYNEFQKFIQRKAHSVYNFEKPVVMKAFEHLQQLELIKPMERTSVNSQREYQLVKLLLDNTQIMNALQKYSNCPTDVRQWATSSLSWL.

K7 is subject to N6-methyllysine. 65 to 72 (GPRGSGKT) contributes to the ATP binding site.

It belongs to the ORC4 family. In terms of assembly, component of ORC, a complex composed of at least 6 subunits: ORC1, ORC2, ORC3, ORC4, ORC5 and ORC6. ORC is regulated in a cell-cycle dependent manner. It is sequentially assembled at the exit from anaphase of mitosis and disassembled as cells enter S phase. Interacts with DBF4. Interacts with POLQ.

The protein localises to the nucleus. Its function is as follows. Component of the origin recognition complex (ORC) that binds origins of replication. DNA-binding is ATP-dependent. The specific DNA sequences that define origins of replication have not been identified yet. ORC is required to assemble the pre-replication complex necessary to initiate DNA replication. Binds histone H3 and H4 trimethylation marks H3K9me3, H3K27me3 and H4K20me3. The chain is Origin recognition complex subunit 4 (Orc4) from Rattus norvegicus (Rat).